A 214-amino-acid chain; its full sequence is Refilin-B (214 aa).

Positions 1-56 (MVGRLSLQDVPELVDAKKKGDGVLDSPDSGLPPSPSPSHWGLAAGGGGGERAAAPG) are disordered. Phosphoserine occurs at positions 6 and 26.

It belongs to the Refilin family. In terms of assembly, interacts with FLNA and FLNB.

Its subcellular location is the cytoplasm. It localises to the cytoskeleton. Functionally, involved in the regulation of the perinuclear actin network and nuclear shape through interaction with filamins. Plays an essential role in the formation of cartilaginous skeletal elements. The chain is Refilin-B from Homo sapiens (Human).